The sequence spans 1314 residues: MKALDEPPYLTVGTDVSAKYRGAFCEAKIKTAKRLVKVKVTFRHDSSTVEVQDDHIKGPLKVGAIVEVKNLDGAYQEAVINKLTDASWYTVVFDDGDEKTLRRSSLCLKGERHFAESETLDQLPLTNPEHFGTPVIGKKTNRGRRSNHIPEEESSSSSSDDDEEERKQTDELLGKVVCVDYVSLEKKKAMWFPALVVCPDCSDEIAVKKDNILVRSFKDGKFTSVPRKDVHEITSDTVPKPDAVLKQAFDQALEFHKSRAIPANWKTELKEDSSSSEAEEEEEEEDDEKEKEDNSSEEEEEIEPFPEERENFLQQLYKFMEDRGTPINKRPVLGYRNLNLFKLFRLVHKLGGFDNIESGAVWKQVYQDLGIPVLNSAAGYNVKCAYKKYLYGFEEYCRSANIDFQMALPEKVLNKPCKDCENKEVKVKEESETEIKEVNVEDSKNVMPKEETPAEDESERKENIKPSLGSKKSLLECIPAQSDEEKEAHITKLEENENLEDKDGGRARTEEAFSTEVDGEEEQARSGDETNKEEDEDDEEIEEEEEEDEEEDEDEDDDDNNEEEEFECYPPGMKVQVRYGRGKNQKMYEASIKDSDVEGGEALYLVHYCGWNVRYDEWIKADKIVRPADKNVPKIKHRKKIKNKLDKEKDRDEKYSPKNCKLRRLSKSPFQSNPSPEMVSKLDLADAKNSDTAHIKSIEITSILNGLQASESSAEDSEQEDERCTQDVDNIGKDESKVEHSTHSRNELISKEEQSSPSLLEENKVHTDLVIAKTVSKSPERLRKDMEAISEDTDFEEEDEITKKRKDVKKDTTDKALKPQTKRGKRRYCSADECLQTGSPGKKEDRTKSKEPLCTENSSNSSSDEDEEEKSKAKMTPTKKYNGLEEKRKSLRTTSFYSGFSEVAEKRIKLLNNSDERLQNNRAKDRKDVWSSIQGQWPKKTLKELFSDSDTEAAASPPHPAPDEGAVEESLQTVAEEESCSPIMELEKPLPASVDNKPIEEKPLEVSDRKTEFPSSGSNSVLNTPPTTPESPSSVTITEASQQQSSVTVSVPLPPNQEEVRSIKSETDSTIEVDSVVGELQDLQSEGNSSPAGFDASVSSSSSNQPEPDNPEKACTGQKRVKDTQGVGSSSKKQKRSHKATVVNNKKKGKGTNSSDSEELSAGESVTKTQTIKSVPTGMKTHNSKSPARVQSPGKGGRNGDKDPDLKEPSNRLPKVYKWSFQTSDLENMTSAERISILQEKLQEIRKHYLSLKSEVASIDRRRKRLKKKERESAATSSSSSSPSSSSITAAVMLTLAEPSMSSASQNGMSVECR.

Disordered stretches follow at residues 123 to 169 (LPLT…RKQT) and 266 to 306 (KTEL…EPFP). Phosphoserine occurs at positions 276, 295, and 296. Over residues 277–305 (EAEEEEEEEDDEKEKEDNSSEEEEEIEPF) the composition is skewed to acidic residues. Positions 306–398 (PEERENFLQQ…YLYGFEEYCR (93 aa)) constitute an ARID domain. Residues Lys428 and Lys461 each participate in a glycyl lysine isopeptide (Lys-Gly) (interchain with G-Cter in SUMO2) cross-link. Positions 439-464 (NVEDSKNVMPKEETPAEDESERKENI) are enriched in basic and acidic residues. Disordered regions lie at residues 439 to 577 (NVED…KVQV), 635 to 678 (IKHR…SPEM), 709 to 888 (ASES…EEKR), 943 to 1215 (KELF…RLPK), and 1256 to 1290 (VASI…SITA). Ser482 is subject to Phosphoserine. The segment covering 486 to 511 (KEAHITKLEENENLEDKDGGRARTEE) has biased composition (basic and acidic residues). The segment covering 531–567 (NKEEDEDDEEIEEEEEEDEEEDEDEDDDDNNEEEEFE) has biased composition (acidic residues). In terms of domain architecture, Tudor-knot spans 572-624 (GMKVQVRYGRGKNQKMYEASIKDSDVEGGEALYLVHYCGWNVRYDEWIKADKI). Residues 643–656 (NKLDKEKDRDEKYS) are compositionally biased toward basic and acidic residues. A phosphoserine mark is found at Ser666, Ser668, Ser675, and Ser717. Basic and acidic residues-rich tracts occupy residues 722–754 (ERCT…KEEQ) and 778–787 (SPERLRKDME). Lys751 participates in a covalent cross-link: Glycyl lysine isopeptide (Lys-Gly) (interchain with G-Cter in SUMO2). A phosphoserine mark is found at Ser778 and Ser790. Positions 788–800 (AISEDTDFEEEDE) are enriched in acidic residues. Position 793 is a phosphothreonine (Thr793). Composition is skewed to basic and acidic residues over residues 808–817 (VKKDTTDKAL), 841–853 (GKKE…KEPL), and 997–1012 (KPIE…RKTE). The span at 1013–1023 (FPSSGSNSVLN) shows a compositional bias: polar residues. Ser1016 bears the Phosphoserine mark. A Phosphothreonine modification is found at Thr1028. Residues 1030-1051 (ESPSSVTITEASQQQSSVTVSV) are compositionally biased toward low complexity. At Ser1031 the chain carries Phosphoserine. A compositionally biased stretch (basic and acidic residues) spans 1058–1067 (EEVRSIKSET). Residues 1089 to 1103 (SSPAGFDASVSSSSS) show a composition bias toward low complexity. A compositionally biased stretch (basic residues) spans 1132 to 1150 (KKQKRSHKATVVNNKKKGK). Residue Thr1152 is modified to Phosphothreonine. A phosphoserine mark is found at Ser1154, Ser1155, Ser1157, and Ser1161. A compositionally biased stretch (polar residues) spans 1164–1186 (ESVTKTQTIKSVPTGMKTHNSKS). Positions 1198 to 1210 (RNGDKDPDLKEPS) are enriched in basic and acidic residues. A coiled-coil region spans residues 1227 to 1272 (ENMTSAERISILQEKLQEIRKHYLSLKSEVASIDRRRKRLKKKERE). The segment covering 1274-1290 (AATSSSSSSPSSSSITA) has biased composition (low complexity).

Component of a Sin3A corepressor complex consisting of SIN3A, SAP130, SUDS3/SAP45, SAP180, HDAC1 and HDAC2. Interacts with ARID4A. Interacts with AR. As to expression, expressed in Sertoli cells of the testis.

It is found in the nucleus. Its function is as follows. Acts as a transcriptional repressor. May function in the assembly and/or enzymatic activity of the Sin3A corepressor complex or in mediating interactions between the complex and other regulatory complexes. Plays a role in the regulation of epigenetic modifications at the PWS/AS imprinting center near the SNRPN promoter, where it might function as part of a complex with RB1 and ARID4A. Involved in spermatogenesis, together with ARID4A, where it functions as a transcriptional coactivator for AR (androgen receptor) and enhances expression of genes required for sperm maturation. Regulates expression of the tight junction protein CLDN3 in the testis, which is important for integrity of the blood-testis barrier. Plays a role in myeloid homeostasis where it regulates the histone methylation state of bone marrow cells and expression of various genes involved in hematopoiesis. May function as a leukemia suppressor. The chain is AT-rich interactive domain-containing protein 4B (Arid4b) from Mus musculus (Mouse).